Here is a 360-residue protein sequence, read N- to C-terminus: Cytokine receptor-like factor 2 (360 aa).

A signal peptide spans 1-18 (MRAVTWAIVAMLLPRVLG). Over 27–238 (TGGVGDTLSV…PRTPGTPTPP (212 aa)) the chain is Extracellular. N-linked (GlcNAc...) asparagine glycosylation occurs at Asn62. Cys77 and Cys90 are joined by a disulfide. In terms of domain architecture, Fibronectin type-III spans 123 to 214 (RPRPPWNVTL…PSKWTGVASL (92 aa)). Asn129 and Asn174 each carry an N-linked (GlcNAc...) asparagine glycan. An intrachain disulfide couples Cys185 to Cys223. Residues 205–209 (PSKWT) carry the WSXWS motif motif. A helical membrane pass occupies residues 239–259 (LALACGLAVALLTLVLLLALL). At 260–360 (RMRRVKEALL…LMGDSGYTTL (101 aa)) the chain is on the cytoplasmic side. A Box 1 motif motif is present at residues 268-276 (LLPGVPDPR).

The protein belongs to the type I cytokine receptor family. Type 5 subfamily. Heterodimer of CRLF2 and IL7R. As to expression, expressed in all tissues examined including brain, thymus, lung, heart, muscle, stomach, small intestine, liver, kidney, spleen, testis and skin. Highest levels in thymus, liver and testis.

Its subcellular location is the membrane. Functionally, receptor for thymic stromal lymphopoietin (TSLP). Forms a functional complex with TSLP and IL7R which is capable of stimulating cell proliferation through activation of STAT3 and STAT5. Also activates JAK2. Implicated in the development of the hematopoietic system. This chain is Cytokine receptor-like factor 2 (Crlf2), found in Rattus norvegicus (Rat).